The primary structure comprises 117 residues: Large ribosomal subunit protein uL18 (117 aa).

It belongs to the universal ribosomal protein uL18 family. In terms of assembly, part of the 50S ribosomal subunit; part of the 5S rRNA/L5/L18/L25 subcomplex. Contacts the 5S and 23S rRNAs.

In terms of biological role, this is one of the proteins that bind and probably mediate the attachment of the 5S RNA into the large ribosomal subunit, where it forms part of the central protuberance. In Methylococcus capsulatus (strain ATCC 33009 / NCIMB 11132 / Bath), this protein is Large ribosomal subunit protein uL18.